We begin with the raw amino-acid sequence, 261 residues long: Imidazole glycerol phosphate synthase subunit HisF (261 aa).

Catalysis depends on residues Asp-16 and Asp-135.

This sequence belongs to the HisA/HisF family. In terms of assembly, heterodimer of HisH and HisF.

Its subcellular location is the cytoplasm. It catalyses the reaction 5-[(5-phospho-1-deoxy-D-ribulos-1-ylimino)methylamino]-1-(5-phospho-beta-D-ribosyl)imidazole-4-carboxamide + L-glutamine = D-erythro-1-(imidazol-4-yl)glycerol 3-phosphate + 5-amino-1-(5-phospho-beta-D-ribosyl)imidazole-4-carboxamide + L-glutamate + H(+). The protein operates within amino-acid biosynthesis; L-histidine biosynthesis; L-histidine from 5-phospho-alpha-D-ribose 1-diphosphate: step 5/9. Its function is as follows. IGPS catalyzes the conversion of PRFAR and glutamine to IGP, AICAR and glutamate. The HisF subunit catalyzes the cyclization activity that produces IGP and AICAR from PRFAR using the ammonia provided by the HisH subunit. This chain is Imidazole glycerol phosphate synthase subunit HisF, found in Mycobacterium leprae (strain Br4923).